A 357-amino-acid polypeptide reads, in one-letter code: MEAAVGDGEGGGGGGGRGKRGRGGGGGEMVEAVWGQTGSTASRIYRVRATGGKDRHSKVYTAKGIRDRRVRLSVATAIQFYDLQDRLGFDQPSKAIEWLINAASPAIDTLPSLDPAAFAAIPHAAADAAPTRRRSQQQQQQLSNKSGCSSTSETSKGSDKEVTVASAPAQAASFTELLIAGVAASSAGGGAIGNGADCVGIAHPGKGGAEGASTYGFSAASSFGDAPPIGMVPAPPFNFSAPGADMAAHYSLAQDQLAAPPPPAGGDYNLNFSMSSGFLGANRGTLQSNSPSNMSGHHHHHHQQQLQRLDGSTISFLLGHAAAAAHPAASEGQITSTAALQLWDGFRHSGMKEKSKN.

The disordered stretch occupies residues 1–29 (MEAAVGDGEGGGGGGGRGKRGRGGGGGEM). Residues 7 to 16 (DGEGGGGGGG) show a composition bias toward gly residues. Residues 52 to 110 (GKDRHSKVYTAKGIRDRRVRLSVATAIQFYDLQDRLGFDQPSKAIEWLINAASPAIDTL) form the TCP domain. 2 disordered regions span residues 125–162 (AADA…DKEV) and 281–307 (ANRG…QQLQ). 2 stretches are compositionally biased toward polar residues: residues 142 to 155 (LSNK…SETS) and 284 to 295 (GTLQSNSPSNMS).

Forms homodimers and heterodimers.

Its subcellular location is the nucleus. Transcription activator. Binds the promoter core sequence 5'-GGNCC-3'. This Oryza sativa subsp. japonica (Rice) protein is Transcription factor PCF6 (PCF6).